A 438-amino-acid chain; its full sequence is RNA polymerase sigma factor SigA (438 aa).

Basic residues predominate over residues 1-11 (MKKSKSKKKAA). Positions 1–69 (MKKSKSKKKA…PLDLEGPLEA (69 aa)) are disordered. Positions 12–26 (KAQEVEVKEPVKEPE) are enriched in basic and acidic residues. Composition is skewed to acidic residues over residues 27 to 45 (PLPELEAAEDLQDLPEPDP) and 52 to 69 (PELEDLADPLDLEGPLEA). Residues 93 to 128 (SDPVRQYLHEIGQVPLLTLEEEIDLARKVEEGMEAI) form a sigma-70 factor domain-1 region. The sigma-70 factor domain-2 stretch occupies residues 202-272 (LIEANLRLVV…NRAIADQART (71 aa)). Positions 226–229 (DLIQ) match the Interaction with polymerase core subunit RpoC motif. Residues 281–359 (ETINKLSRTA…DENLPSPVEA (79 aa)) are sigma-70 factor domain-3. The interval 372-424 (ALSKLSEREAMVLKLRKGLIDGREHTLEEVGAYFGVTRERIRQIENKALRKLK) is sigma-70 factor domain-4. The segment at residues 398-417 (LEEVGAYFGVTRERIRQIEN) is a DNA-binding region (H-T-H motif).

Belongs to the sigma-70 factor family. RpoD/SigA subfamily. In terms of assembly, interacts transiently with the RNA polymerase catalytic core formed by RpoA, RpoB, RpoC and RpoZ (2 alpha, 1 beta, 1 beta' and 1 omega subunit) to form the RNA polymerase holoenzyme that can initiate transcription.

Its subcellular location is the cytoplasm. Sigma factors are initiation factors that promote the attachment of RNA polymerase to specific initiation sites and are then released. This sigma factor is the primary sigma factor during exponential growth. The sequence is that of RNA polymerase sigma factor SigA from Thermus aquaticus.